The chain runs to 92 residues: Small ribosomal subunit protein uS19 (92 aa).

The protein belongs to the universal ribosomal protein uS19 family.

Functionally, protein S19 forms a complex with S13 that binds strongly to the 16S ribosomal RNA. This chain is Small ribosomal subunit protein uS19, found in Trichlorobacter lovleyi (strain ATCC BAA-1151 / DSM 17278 / SZ) (Geobacter lovleyi).